The following is a 1066-amino-acid chain: Vinculin (1066 aa).

The tract at residues 1–835 (MPVFHTRTIE…GAVAKVREAF (835 aa)) is N-terminal globular head. Ser97 is modified (phosphoserine). Residues 168–208 (MTKMAKMIDERQQELTHQEHRVMLVNSMNTVKELLPVLISA) form a talin-interaction region. Lys173 bears the N6-acetyllysine mark. Tandem repeats lie at residues 259 to 369 (ASKD…KVEN), 370 to 479 (AARK…KTNR), and 480 to 589 (AVAN…QMQE). Positions 259 to 589 (ASKDTEAMKR…LKDLKAQMQE (331 aa)) are 3 X 112 AA tandem repeats. Residues Ser260, Ser272, Ser275, Ser290, Ser346, and Ser434 each carry the phosphoserine modification. Lys496 is modified (N6-acetyllysine). Tyr537 carries the phosphotyrosine modification. Residues Ser574, Ser579, and Ser600 each carry the phosphoserine modification. Phosphothreonine occurs at positions 604 and 672. Ser721 is subject to Phosphoserine. Residues 741–764 (MANIQPQMLVAGATSIARRANRIL) form an interaction with ACTN4 region. A phosphoserine mark is found at Ser795 and Ser809. At Tyr822 the chain carries Phosphotyrosine. The tract at residues 836–878 (QPQEPDFPPPPPDLEQLRLTDELAPPKPPLPEGEVPPPRPPPP) is linker (Pro-rich). The segment at 857–887 (ELAPPKPPLPEGEVPPPRPPPPEEKDEEFPE) is disordered. The segment covering 860–876 (PPKPPLPEGEVPPPRPP) has biased composition (pro residues). The interval 879-1066 (EEKDEEFPEQ…RWVRKTPWYQ (188 aa)) is C-terminal tail. 2 facilitates phospholipid membrane insertion regions span residues 935 to 978 (RLVR…KRIR) and 1052 to 1066 (AGFTLRWVRKTPWYQ). Tyr1065 bears the Phosphotyrosine; by SRC-type Tyr-kinases mark.

The protein belongs to the vinculin/alpha-catenin family. As to quaternary structure, exhibits self-association properties. Part of a complex composed of THSD1, PTK2/FAK1, TLN1 and VCL. Interacts with APBB1IP, NRAP and TLN1. Interacts with SYNM. Interacts with CTNNB1 and this interaction is necessary for its localization to the cell-cell junctions and for its function in regulating cell surface expression of E-cadherin. Interacts with SORBS1. Interacts with SYNM. Interacts with CTNNA1. Binds to ACTN4; this interaction triggers conformational changes. Interacts with FLII. In terms of processing, phosphorylated; on serines, threonines and tyrosines. Phosphorylation on Tyr-1065 in activated platelets affects head-tail interactions and cell spreading but has no effect on actin binding nor on localization to focal adhesion plaques. Post-translationally, acetylated; mainly by myristic acid but also by a small amount of palmitic acid.

The protein localises to the cell membrane. Its subcellular location is the cell junction. The protein resides in the adherens junction. It localises to the focal adhesion. It is found in the cytoplasm. The protein localises to the cytoskeleton. Its subcellular location is the sarcolemma. The protein resides in the cell projection. It localises to the podosome. Actin filament (F-actin)-binding protein involved in cell-matrix adhesion and cell-cell adhesion. Regulates cell-surface E-cadherin expression and potentiates mechanosensing by the E-cadherin complex. May also play important roles in cell morphology and locomotion. This chain is Vinculin (Vcl), found in Mus musculus (Mouse).